The sequence spans 262 residues: GTP cyclohydrolase 1 type 2 homolog (262 aa).

Residues His-65, Asp-102, His-222, and Glu-225 each coordinate a divalent metal cation.

The protein belongs to the GTP cyclohydrolase I type 2/NIF3 family. Homohexamer.

This Streptococcus pyogenes serotype M3 (strain ATCC BAA-595 / MGAS315) protein is GTP cyclohydrolase 1 type 2 homolog.